The chain runs to 305 residues: Aquaporin-1 (305 aa).

A disordered region spans residues 1 to 34; that stretch reads MSSNDSNDTDKQHTRLDPTGVDDAYIPPEQPETK. Topologically, residues 1 to 48 are cytoplasmic; sequence MSSNDSNDTDKQHTRLDPTGVDDAYIPPEQPETKHHRFKISKDTLRNH. A helical transmembrane segment spans residues 49–69; that stretch reads FIAAAGEFCGTFMFLWCAYVI. The Extracellular segment spans residues 70–91; it reads CNVANHDVALVAAPDGSHPGQL. A helical membrane pass occupies residues 92–112; sequence IMIAIGFGFSVMFSIWCFAGV. At 113-136 the chain is on the cytoplasmic side; that stretch reads SGGALNPAMSLSLCLARAVSPTRC. The NPA 1 motif lies at 118-120; it reads NPA. Residues 137 to 157 form a helical membrane-spanning segment; sequence VVMWVSQIVAGMAAGGAASAM. Residues 158–176 are Extracellular-facing; sequence TPGEVLFANSLGLGCSRTR. A helical transmembrane segment spans residues 177–197; that stretch reads GLFLEMFGTAILCLTVLMTAV. Residues 198-203 are Cytoplasmic-facing; that stretch reads EKRETN. The helical transmembrane segment at 204 to 224 threads the bilayer; sequence FMAALPIGISLFIAHVALTAY. Over 225–248 the chain is Extracellular; the sequence is TGTGVNPARSLGAAVAARYFPHYH. An NPA 2 motif is present at residues 230–232; it reads NPA. The chain crosses the membrane as a helical span at residues 249–269; sequence WIYWIGTLLGSILAWSVWQLL. Over 270-305 the chain is Cytoplasmic; sequence QILDYTTYVTAEKAASTKEKAQKKGETSSSSAVAEV. The segment covering 286 to 295 has biased composition (basic and acidic residues); the sequence is TKEKAQKKGE. A disordered region spans residues 286-305; the sequence is TKEKAQKKGETSSSSAVAEV. A compositionally biased stretch (polar residues) spans 296 to 305; sequence TSSSSAVAEV.

This sequence belongs to the MIP/aquaporin (TC 1.A.8) family.

Its subcellular location is the endoplasmic reticulum membrane. The protein localises to the cell membrane. In terms of biological role, water channel required to facilitate the transport of water across membranes. Involved in sporulation, freeze tolerance and osmotolerance. Is non-functional in most laboratory strains. This chain is Aquaporin-1 (AQY1), found in Saccharomyces cerevisiae (strain YJM789) (Baker's yeast).